Consider the following 206-residue polypeptide: Probable thymidylate kinase (206 aa).

7 to 14 (GIDGSGKS) contributes to the ATP binding site.

The protein belongs to the thymidylate kinase family.

It carries out the reaction dTMP + ATP = dTDP + ADP. This chain is Probable thymidylate kinase, found in Methanospirillum hungatei JF-1 (strain ATCC 27890 / DSM 864 / NBRC 100397 / JF-1).